The chain runs to 73 residues: uncharacterized protein (73 aa).

The N-terminal stretch at 1–30 (MVDFYFIEEKVAYRAAFTTTGKIAATLGLA) is a signal peptide.

This is an uncharacterized protein from Archaeoglobus fulgidus (strain ATCC 49558 / DSM 4304 / JCM 9628 / NBRC 100126 / VC-16).